Here is a 347-residue protein sequence, read N- to C-terminus: Lipoyl synthase (347 aa).

Residues Cys55, Cys60, Cys66, Cys81, Cys85, Cys88, and Ser292 each contribute to the [4Fe-4S] cluster site. Residues 67-281 (WEDREASFLI…SEAAYDMGFP (215 aa)) form the Radical SAM core domain.

Belongs to the radical SAM superfamily. Lipoyl synthase family. Requires [4Fe-4S] cluster as cofactor.

The protein localises to the cytoplasm. The enzyme catalyses [[Fe-S] cluster scaffold protein carrying a second [4Fe-4S](2+) cluster] + N(6)-octanoyl-L-lysyl-[protein] + 2 oxidized [2Fe-2S]-[ferredoxin] + 2 S-adenosyl-L-methionine + 4 H(+) = [[Fe-S] cluster scaffold protein] + N(6)-[(R)-dihydrolipoyl]-L-lysyl-[protein] + 4 Fe(3+) + 2 hydrogen sulfide + 2 5'-deoxyadenosine + 2 L-methionine + 2 reduced [2Fe-2S]-[ferredoxin]. It participates in protein modification; protein lipoylation via endogenous pathway; protein N(6)-(lipoyl)lysine from octanoyl-[acyl-carrier-protein]: step 2/2. In terms of biological role, catalyzes the radical-mediated insertion of two sulfur atoms into the C-6 and C-8 positions of the octanoyl moiety bound to the lipoyl domains of lipoate-dependent enzymes, thereby converting the octanoylated domains into lipoylated derivatives. The polypeptide is Lipoyl synthase (Corynebacterium urealyticum (strain ATCC 43042 / DSM 7109)).